Here is a 200-residue protein sequence, read N- to C-terminus: Rho-related protein racD (200 aa).

The GTP site is built by Ala-20, Gly-22, Lys-23, Thr-24, Cys-25, Tyr-39, and Thr-42. A Mg(2+)-binding site is contributed by Thr-24. 2 short sequence motifs (switch) span residues 33–44 and 64–82; these read NEFPKDYVPTVF and DTAGQEDYEQLRPLSYPNT. Thr-42 contributes to the Mg(2+) binding site. The GTP site is built by Lys-123, Asp-125, and Ala-166. A Cysteine methyl ester modification is found at Cys-197. Cys-197 carries the S-geranylgeranyl cysteine lipid modification. A propeptide spans 198 to 200 (removed in mature form); the sequence is ALL.

This sequence belongs to the small GTPase superfamily. Rho family. Mg(2+) is required as a cofactor.

Its subcellular location is the cell membrane. The protein resides in the cytoplasm. It is found in the cytoskeleton. It catalyses the reaction GTP + H2O = GDP + phosphate + H(+). With respect to regulation, regulated by guanine nucleotide exchange factors (GEFs) which promote the exchange of bound GDP for free GTP, GTPase activating proteins (GAPs) which increase the GTP hydrolysis activity, and GDP dissociation inhibitors which inhibit the dissociation of the nucleotide from the GTPase. Small GTPase which cycles between active GTP-bound and inactive GDP-bound states. In Entamoeba histolytica (strain ATCC 30459 / HM-1:IMSS / ABRM), this protein is Rho-related protein racD.